A 266-amino-acid polypeptide reads, in one-letter code: Heat-inducible transcription repressor HrcA (266 aa).

The protein belongs to the HrcA family.

Negative regulator of class I heat shock genes (grpE-dnaK-dnaJ and groELS operons). Prevents heat-shock induction of these operons. In Helicobacter pylori (strain ATCC 700392 / 26695) (Campylobacter pylori), this protein is Heat-inducible transcription repressor HrcA.